Here is a 466-residue protein sequence, read N- to C-terminus: Zinc metalloproteinase/disintegrin (466 aa).

Residues 1 to 6 form the signal peptide; sequence FPYQGS. A propeptide spanning residues 7 to 174 is cleaved from the precursor; that stretch reads SIILESGNVN…PIKKASQLIV (168 aa). One can recognise a Peptidase M12B domain in the interval 180–377; the sequence is RYMEIVIVVD…ENPPCILNKP (198 aa). Positions 183 and 267 each coordinate Ca(2+). 3 disulfide bridges follow: Cys-291-Cys-372, Cys-331-Cys-356, and Cys-333-Cys-339. His-316 serves as a coordination point for Zn(2+). Glu-317 is a catalytic residue. Positions 320 and 326 each coordinate Zn(2+). Ca(2+) contacts are provided by Cys-372 and Asn-375. Residues 377-401 constitute a propeptide that is removed on maturation; sequence PLRTDTVSTPVSGNELLEAGKDYDR. The region spanning 385–466 is the Disintegrin domain; the sequence is TPVSGNELLE…GDCPRNPYHA (82 aa). Cystine bridges form between Cys-422/Cys-428, Cys-427/Cys-452, and Cys-440/Cys-459. The Cell attachment site motif lies at 444–446; the sequence is RGD.

Belongs to the venom metalloproteinase (M12B) family. P-II subfamily. P-IIa sub-subfamily. Monomer. The cofactor is Zn(2+). In terms of tissue distribution, expressed by the venom gland.

The protein resides in the secreted. In terms of biological role, impairs hemostasis in the envenomed animal. Its function is as follows. Inhibits platelet aggregation induced by ADP, thrombin, platelet-activating factor and collagen. Acts by inhibiting fibrinogen interaction with platelet receptors GPIIb/GPIIIa (ITGA2B/ITGB3). This Deinagkistrodon acutus (Hundred-pace snake) protein is Zinc metalloproteinase/disintegrin.